A 493-amino-acid polypeptide reads, in one-letter code: MSKVDLWQDATAQAELVRSGEISRTELLEATIAHVQAVNPEINAVIIPLFEKARRESELASGPFAGVPYLLKDLTVVSQGDINTSSIKGMKESGYRADHDAYFVQRMRAAGFVLLGKTNTPEMGNQVTTEPEAWGATRNPWNLGRSVGGSSGGSGAAVAAALSPVAHGNDAAGSVRIPASVCGVVGLKPTRGRISPGPLVTDSDNVAGAAHEGLFARSVRDIAALLDVVSGHRPGDTFCAPTASRPYAQGISENPGSLRVGVLTHNPVGDFALDPECAAAARGAAAALAALGHDVNDAYPEALGDRSFLKDYSTICDVAIAREIERNGELIGRPLTEDDVEWTSWEMVKRADQVTGRAFAACVDELRYYAGKVERWWEAGWDLLILPTVTRQTPEIGELMLAKGTDLEGRQSAFISGSLQMLAFTVPFNVSGQPAISLPIGMSSDGMPIGVQIVAAYGREDLLLQVAAQLEGALPWVARRPQLLNPSRKIPAA.

Catalysis depends on charge relay system residues Lys-72 and Ser-150. Ser-174 (acyl-ester intermediate) is an active-site residue.

This sequence belongs to the amidase family. Homodimer.

The enzyme catalyses 1,8-diazacyclotetradecane-2,9-dione + H2O = N-(6-aminohexanoyl)-6-aminohexanoate. The protein operates within xenobiotic degradation; nylon-6 oligomer degradation. With respect to regulation, strongly inhibited by 1 uM diisopropylphosphofluoridate and 10 uM p-chloromercuribenzoate but scarcely inhibited by 100 mM EDTA in vitro. Specifically catalyzes the hydrolysis of 6-aminohexanoic acid cyclic dimer (1,8-diazacyclotetradecane-2,9-dione) to form the linear dimer 6-aminohexanoyl-6-aminohexanoic acid. Is inactive on 6-aminohexanoic acid oligomers (degree of polymerization 2 to 6), various other cyclic amides, cyclic diamides, linear amides, oligopeptides, and casein. Allows the bacterium to grow on a medium containing 6-aminohexanoic acid cyclic dimer as the sole carbon and nitrogen sources. This Paenarthrobacter ureafaciens protein is 6-aminohexanoate-cyclic-dimer hydrolase (nylA).